Consider the following 316-residue polypeptide: HPr kinase/phosphorylase (316 aa).

Residues H143 and K164 contribute to the active site. Residue 158-165 (GEAGSGKS) participates in ATP binding. S165 lines the Mg(2+) pocket. Residue D182 is the Proton acceptor; for phosphorylation activity. Proton donor; for dephosphorylation activity of the active site. Residues 206–215 (LEVRGLGVLN) are important for the catalytic mechanism of both phosphorylation and dephosphorylation. Position 207 (E207) interacts with Mg(2+). Residue R251 is part of the active site. The tract at residues 272–277 (PVMPGR) is important for the catalytic mechanism of dephosphorylation.

The protein belongs to the HPrK/P family. In terms of assembly, homohexamer. The cofactor is Mg(2+).

It carries out the reaction [HPr protein]-L-serine + ATP = [HPr protein]-O-phospho-L-serine + ADP + H(+). The enzyme catalyses [HPr protein]-O-phospho-L-serine + phosphate + H(+) = [HPr protein]-L-serine + diphosphate. Catalyzes the ATP- as well as the pyrophosphate-dependent phosphorylation of a specific serine residue in HPr, a phosphocarrier protein of the phosphoenolpyruvate-dependent sugar phosphotransferase system (PTS). HprK/P also catalyzes the pyrophosphate-producing, inorganic phosphate-dependent dephosphorylation (phosphorolysis) of seryl-phosphorylated HPr (P-Ser-HPr). The chain is HPr kinase/phosphorylase from Xanthomonas axonopodis pv. citri (strain 306).